A 118-amino-acid polypeptide reads, in one-letter code: UPF0148 protein LS215_1455 (118 aa).

This sequence belongs to the UPF0148 family.

The sequence is that of UPF0148 protein LS215_1455 from Saccharolobus islandicus (strain L.S.2.15 / Lassen #1) (Sulfolobus islandicus).